Here is a 549-residue protein sequence, read N- to C-terminus: Cation/acetate symporter ActP (549 aa).

13 helical membrane-spanning segments follow: residues 33–53 (WQAI…TYWA), 77–97 (LAIA…ALVF), 103–123 (GLIY…LIAE), 148–168 (ILSA…QMVG), 183–203 (IAVV…GMLA), 206–226 (WVQI…AFMV), 262–282 (ISAL…PHIL), 303–323 (GFMG…IMLV), 355–375 (LFLG…VAGL), 404–424 (VSKI…VLFE), 428–448 (IAFM…PIIL), 464–484 (GGWL…TIWV), and 493–513 (IFPY…GIWF).

The protein belongs to the sodium:solute symporter (SSF) (TC 2.A.21) family.

It is found in the cell inner membrane. In terms of biological role, transports acetate. In Salmonella agona (strain SL483), this protein is Cation/acetate symporter ActP.